Reading from the N-terminus, the 572-residue chain is Methionine--tRNA ligase (572 aa).

A 'HIGH' region motif is present at residues 11–21 (PYINGVKHLGN). Zn(2+) contacts are provided by cysteine 143, cysteine 146, cysteine 156, and cysteine 159. Residues 341 to 345 (KFSTS) carry the 'KMSKS' region motif. ATP is bound at residue threonine 344.

This sequence belongs to the class-I aminoacyl-tRNA synthetase family. MetG type 1 subfamily. As to quaternary structure, monomer. It depends on Zn(2+) as a cofactor.

Its subcellular location is the cytoplasm. It carries out the reaction tRNA(Met) + L-methionine + ATP = L-methionyl-tRNA(Met) + AMP + diphosphate. Is required not only for elongation of protein synthesis but also for the initiation of all mRNA translation through initiator tRNA(fMet) aminoacylation. This Maricaulis maris (strain MCS10) (Caulobacter maris) protein is Methionine--tRNA ligase.